The following is a 380-amino-acid chain: MRFFTQSPFPLRTLTRRLTAFVCVGLLLLPGFTLAASVRIKDITDMEGVRSNQLIGYGLVVGLNGTGDRLTNTIFTRETLISMLNRLGVNIRDQETQLQTHDVAAVMVTADLPAFVHGGNRIDVTVSAAGDASSLTGGTLLVTPLMAADGEVYAVAQGSLATNAFSARGAAASITRNVPTSGHIANGGIVEREVPFDLSHRANLHLSLRNPDFTTASRIASIINRTFGPIAIVQDPRTVLLDLSNHDPVSTLSRIGDLLVTPDTPAKVVVDEASGTIIMGADVRISTVAVAQGNLTVQVTETPQVSQPGPFSGGQTAVVPRTNVKVDTGKTHHLAVVPGGTTLRELVSGLNALGVGPRDMISILQAIKADGALQAELEMR.

The signal sequence occupies residues 1-35 (MRFFTQSPFPLRTLTRRLTAFVCVGLLLLPGFTLA).

The protein belongs to the FlgI family. As to quaternary structure, the basal body constitutes a major portion of the flagellar organelle and consists of four rings (L,P,S, and M) mounted on a central rod.

It is found in the periplasm. The protein localises to the bacterial flagellum basal body. Assembles around the rod to form the L-ring and probably protects the motor/basal body from shearing forces during rotation. The polypeptide is Flagellar P-ring protein (Gluconobacter oxydans (strain 621H) (Gluconobacter suboxydans)).